The following is a 1070-amino-acid chain: Granule associated Rac and RHOG effector protein 1 (1070 aa).

Disordered stretches follow at residues 681–771 (EQKA…VGAG), 855–992 (SQAM…STLP), and 1032–1070 (SYVQ…LPQY). Residues 692-702 (PSLPVPPPPRA) are compositionally biased toward pro residues. Composition is skewed to low complexity over residues 719 to 742 (PQQQ…QPIG), 906 to 924 (AQGD…NGDS), and 951 to 962 (TSTLPSPPLLTT). Ser723 is subject to Phosphoserine. The span at 977–992 (PKAPWQHPSPLPSTLP) shows a compositional bias: pro residues. Positions 1046–1058 (HKAAPKGFKAFPG) are enriched in low complexity.

As to quaternary structure, interacts with AGO2 and TNRC6A.

It localises to the cytoplasm. The protein localises to the P-body. In terms of biological role, acts as an effector of RAC1. Associates with CCR4-NOT complex which is one of the major cellular mRNA deadenylases and is linked to various cellular processes including bulk mRNA degradation, miRNA-mediated repression, translational repression during translational initiation and general transcription regulation. May also play a role in miRNA silencing machinery. The sequence is that of Granule associated Rac and RHOG effector protein 1 from Homo sapiens (Human).